Reading from the N-terminus, the 505-residue chain is L-arabinose isomerase (505 aa).

Positions 308, 335, 352, and 453 each coordinate Mn(2+).

It belongs to the arabinose isomerase family. Requires Mn(2+) as cofactor.

It catalyses the reaction beta-L-arabinopyranose = L-ribulose. It functions in the pathway carbohydrate degradation; L-arabinose degradation via L-ribulose; D-xylulose 5-phosphate from L-arabinose (bacterial route): step 1/3. In terms of biological role, catalyzes the conversion of L-arabinose to L-ribulose. This is L-arabinose isomerase from Bifidobacterium longum (strain DJO10A).